Reading from the N-terminus, the 674-residue chain is MNDMTLYLIIALVPLAGSLIAGLFGNKIGRAGAHTVTILGVAVSAVLSAYVLWGFIDGSRAKFDENVYTWLTMGGLDFSVGFLVDTMTAMMMVVVTGVSLMVHIYTIGYMHDEKVGYQRFFSYISLFTFSMLMLIMSNNFIQLFFGWEAVGLVSYLLIGFYFKRPSATFANLKAFLINRVGDFGFLLGIGLVLAYFGGSLRYQDVFAYLPNVQNATIQLFPGVEWSLITVTCLLLFVGAMGKSAQFPLHVWLPDSMEGPTPISALIHAATMVTAGLFMVSRMSPIYEMSSTALSVIMVIGAITALFMGFLGVIQNDIKRVVAYSTLSQLGYMTVALGASAYSVAMFHVMTHAFFKALLFLAAGSAIIGMHHDQDMRHMGNLKKYMPVTWLTMLIGNLSLIGTPFFSGFYSKDSIIEAAKYSTLPGSGFAYFAVLASVFVTAFYAFRQYFMVFHGEEKWRSLPEHHSDGHGEEHHGLGKNDNPHESPLVVTLPLILLAVPSVIIGYIAIEPMLYGDFFKDVIFVNADAHPTIHIMKEEFHGALAMVSHSLHSPVLYLAIAGVLSAWLLYVKLPHLPAKIAQTFRPIYVLFENKYYLDALYFNVFAKGTRALGTFFWKVGDTAIIDNGIVNGSAKLVGAIAAQVRKAQTGFIYTYAAAMVFGVLVLLGMTFWGLFR.

16 helical membrane-spanning segments follow: residues 4–24, 36–56, 67–87, 90–110, 115–135, 140–160, 180–200, 219–239, 259–279, 293–313, 348–368, 385–405, 425–445, 488–508, 549–569, and 653–673; these read MTLYLIIALVPLAGSLIAGLF, VTILGVAVSAVLSAYVLWGFI, VYTWLTMGGLDFSVGFLVDTM, MMMVVVTGVSLMVHIYTIGYM, VGYQRFFSYISLFTFSMLMLI, FIQLFFGWEAVGLVSYLLIGF, VGDFGFLLGIGLVLAYFGGSL, LFPGVEWSLITVTCLLLFVGA, PTPISALIHAATMVTAGLFMV, LSVIMVIGAITALFMGFLGVI, VMTHAFFKALLFLAAGSAIIG, MPVTWLTMLIGNLSLIGTPFF, GSGFAYFAVLASVFVTAFYAF, VVTLPLILLAVPSVIIGYIAI, LHSPVLYLAIAGVLSAWLLYV, and YAAAMVFGVLVLLGMTFWGLF.

It belongs to the complex I subunit 5 family.

It localises to the cell membrane. The enzyme catalyses a quinone + NADH + 5 H(+)(in) = a quinol + NAD(+) + 4 H(+)(out). Its function is as follows. NDH-1 shuttles electrons from NADH, via FMN and iron-sulfur (Fe-S) centers, to quinones in the respiratory chain. The immediate electron acceptor for the enzyme in this species is believed to be ubiquinone. Couples the redox reaction to proton translocation (for every two electrons transferred, four hydrogen ions are translocated across the cytoplasmic membrane), and thus conserves the redox energy in a proton gradient. This chain is NADH-quinone oxidoreductase subunit L (nuoL), found in Neisseria meningitidis serogroup B (strain ATCC BAA-335 / MC58).